The following is a 61-amino-acid chain: Progonadoliberin-1 (61 aa).

The residue at position 1 (Gln1) is a Pyrrolidone carboxylic acid. Gly10 is subject to Glycine amide.

This sequence belongs to the GnRH family.

It is found in the secreted. Functionally, stimulates the secretion of gonadotropins; it stimulates the secretion of both luteinizing and follicle-stimulating hormones. This is Progonadoliberin-1 (GNRH1) from Ovis aries (Sheep).